The chain runs to 281 residues: N-methyltransferase tcpN (281 aa).

It belongs to the methyltransferase superfamily. LaeA methyltransferase family.

The protein operates within secondary metabolite biosynthesis. In terms of biological role, N-methyltransferase; part of the gene cluster that mediates the biosynthesis of an unusual class of epipolythiodioxopiperazines (ETPs) lacking the reactive thiol group important for toxicity. Firstly, L-tyrosine is prenylated by tcpD, before undergoing condensation with L-glycine in a reaction catalyzed by the NRPS tcpP leading to the diketopiperazine (DKP) backbone. Afterwards the alpha-carbon of tyrosine is oxidized by the cytochrome P450 tcpC to form a hydroxyl group. However, in contrast other ETP biosynthesis pathways studied so far, tcpC is not able to bishydroxylate the DKP at both alpha-carbon positions, but hydroxylates the alpha-carbon of the tyrosine part and the nitrogen of the glycine part. The next steps involve an alpha,beta-elimination reaction catalyzed by tcpI, a methylation by the methyltransferase tcpN the action of the four enzyme cascade tcpG/K/J/I. Due to a dysfunctional cytochrome P450 monooxygenase tcpC, the pathway leads to the biosynthesis of probable non-toxic metabolites lacking the reactive thiol group. This is N-methyltransferase tcpN from Claviceps purpurea (strain 20.1) (Ergot fungus).